The following is a 711-amino-acid chain: Double-stranded RNA-specific editase 1 (711 aa).

A disordered region spans residues 1–78 (MDIEDEENMS…KRRKTPGPVL (78 aa)). Positions 63–73 (SKYRLKKRRKT) are enriched in basic residues. Residues 78–144 (LPKNALMQLN…AEKALRSFVQ (67 aa)) enclose the DRBM 1 domain. 2 interaction with substrate RNA regions span residues 83 to 88 (LMQLNE) and 104 to 105 (VH). Ser149 carries the phosphoserine modification. The interval 176–220 (LFNGFETPDKSEPPFYVGSNGDDSFSSSGDVSLSASPVPASLTQP) is disordered. The segment covering 192–213 (VGSNGDDSFSSSGDVSLSASPV) has biased composition (low complexity). One can recognise a DRBM 2 domain in the interval 231–298 (PSGKNPVMIL…AQSALATVFN (68 aa)). 2 interaction with substrate RNA regions span residues 237–242 (VMILNE) and His259. One can recognise an A to I editase domain in the interval 370-707 (SVSTGTKCIN…VEKPTEQDQF (338 aa)). His394 provides a ligand contact to Zn(2+). Residue Glu396 is the Proton donor of the active site. Arg400 and Arg401 together coordinate 1D-myo-inositol hexakisphosphate. Residues Cys451 and Cys526 each contribute to the Zn(2+) site. Positions 529, 532, 639, 672, 682, and 700 each coordinate 1D-myo-inositol hexakisphosphate.

Homodimer. Homodimerization is essential for its catalytic activity. Can form heterodimers with isoform 5 of ADAR/ADAR1. 1D-myo-inositol hexakisphosphate serves as cofactor.

It is found in the nucleus. The protein localises to the nucleolus. The enzyme catalyses adenosine in double-stranded RNA + H2O + H(+) = inosine in double-stranded RNA + NH4(+). In terms of biological role, catalyzes the hydrolytic deamination of adenosine to inosine in double-stranded RNA (dsRNA) referred to as A-to-I RNA editing. This may affect gene expression and function in a number of ways that include mRNA translation by changing codons and hence the amino acid sequence of proteins; pre-mRNA splicing by altering splice site recognition sequences; RNA stability by changing sequences involved in nuclease recognition; genetic stability in the case of RNA virus genomes by changing sequences during viral RNA replication; and RNA structure-dependent activities such as microRNA production or targeting or protein-RNA interactions. Can edit both viral and cellular RNAs and can edit RNAs at multiple sites (hyper-editing) or at specific sites (site-specific editing). Its cellular RNA substrates include: bladder cancer-associated protein (BLCAP), neurotransmitter receptors for glutamate (GRIA2 and GRIK2) and serotonin (HTR2C), GABA receptor (GABRA3) and potassium voltage-gated channel (KCNA1). Site-specific RNA editing of transcripts encoding these proteins results in amino acid substitutions which consequently alter their functional activities. Edits GRIA2 at both the Q/R and R/G sites efficiently but converts the adenosine in hotspot1 much less efficiently. Can inhibit cell proliferation and migration and can stimulate exocytosis. The chain is Double-stranded RNA-specific editase 1 (Adarb1) from Mus musculus (Mouse).